The following is a 233-amino-acid chain: MIIPHRADGGKNDVSAAELLKDERAARGWLTQAFAPSTEQWAQIERFVTMLIAENAKQNLIAASTIPAIWARHIADSAQLLALDTREGEGLWIDLGSGPGLPGLVVAILSERPMLLVESRRRRCDFLRAVVAELALDHVEVAEAPLERVATRPAATISARAFAPLDRLIDLSARFSTESTRWLLPKGRNAVKELALLPEPWQRMFHVEQSRTDAESGILVGTGRIAPKKRGKA.

Residues G96, L101, 146 to 147, and R160 contribute to the S-adenosyl-L-methionine site; that span reads LE.

It belongs to the methyltransferase superfamily. RNA methyltransferase RsmG family.

It is found in the cytoplasm. It carries out the reaction guanosine(527) in 16S rRNA + S-adenosyl-L-methionine = N(7)-methylguanosine(527) in 16S rRNA + S-adenosyl-L-homocysteine. Functionally, specifically methylates the N7 position of guanine in position 527 of 16S rRNA. This chain is Ribosomal RNA small subunit methyltransferase G, found in Sphingopyxis alaskensis (strain DSM 13593 / LMG 18877 / RB2256) (Sphingomonas alaskensis).